The following is a 94-amino-acid chain: Putative pterin-4-alpha-carbinolamine dehydratase (94 aa).

Belongs to the pterin-4-alpha-carbinolamine dehydratase family.

It catalyses the reaction (4aS,6R)-4a-hydroxy-L-erythro-5,6,7,8-tetrahydrobiopterin = (6R)-L-erythro-6,7-dihydrobiopterin + H2O. The sequence is that of Putative pterin-4-alpha-carbinolamine dehydratase from Mycobacterium leprae (strain Br4923).